Reading from the N-terminus, the 129-residue chain is Follitropin subunit beta (129 aa).

An N-terminal signal peptide occupies residues 1 to 20 (MKSVQFCFLFCCWRAICCRS). 6 cysteine pairs are disulfide-bonded: Cys-21/Cys-69, Cys-35/Cys-84, Cys-38/Cys-122, Cys-46/Cys-100, Cys-50/Cys-102, and Cys-105/Cys-112. Asn-25 and Asn-42 each carry an N-linked (GlcNAc...) asparagine glycan.

The protein belongs to the glycoprotein hormones subunit beta family. In terms of assembly, heterodimer. The active follitropin is a heterodimer composed of an alpha chain/CGA shared with other hormones and a unique beta chain/FSHB shown here.

The protein resides in the secreted. Its function is as follows. Together with the alpha chain CGA constitutes follitropin, the follicle-stimulating hormone, and provides its biological specificity to the hormone heterodimer. Binds FSHR, a G protein-coupled receptor, on target cells to activate downstream signaling pathways. Follitropin is involved in follicle development and spermatogenesis in reproductive organs. The chain is Follitropin subunit beta (FSHB) from Bubalus bubalis (Domestic water buffalo).